The following is a 283-amino-acid chain: Pantothenate synthetase (283 aa).

31–38 (MGALHDGH) serves as a coordination point for ATP. The active-site Proton donor is the His-38. Residue Gln-62 participates in (R)-pantoate binding. Gln-62 contacts beta-alanine. 148–151 (GKKD) is an ATP binding site. Gln-154 contacts (R)-pantoate. Residues Val-177 and 185–188 (KSSR) contribute to the ATP site.

This sequence belongs to the pantothenate synthetase family. As to quaternary structure, homodimer.

The protein localises to the cytoplasm. The enzyme catalyses (R)-pantoate + beta-alanine + ATP = (R)-pantothenate + AMP + diphosphate + H(+). Its pathway is cofactor biosynthesis; (R)-pantothenate biosynthesis; (R)-pantothenate from (R)-pantoate and beta-alanine: step 1/1. Functionally, catalyzes the condensation of pantoate with beta-alanine in an ATP-dependent reaction via a pantoyl-adenylate intermediate. The chain is Pantothenate synthetase from Staphylococcus aureus (strain MRSA252).